We begin with the raw amino-acid sequence, 307 residues long: MTTLLETPGYSEKLHDSIEKKLSEYGWGEEAASLADFVLVMLSNGKTQTEINEELVDLIGSDFDTSFSLWLFNQIEELEKSKNASVESVSKIDEIDFIEKESTDKSQQSFSVPETSIQPQSSQTPNITSLREEKELPTGRVGQKLKLTSQKQRFNPMAASFNYSKSVMPAAKRALTQTQEVPLCKYADKCSRANCIFAHPTPAAAPGEGMVLSSEMCASGKECKAADCVKGHPSPATVTTLPPFMSMSTIPIPCKYKPCLNPACRFIHPTKSRNMTWRPPSKTEETSLSERSFAVNESEEQLHVPSV.

A disordered region spans residues serine 102 to glutamate 135. Residues lysine 105–serine 129 show a composition bias toward polar residues. 3 consecutive C3H1-type zinc fingers follow at residues threonine 178–proline 202, cysteine 217–histidine 232, and cysteine 254–histidine 268. Positions asparagine 274–valine 307 are disordered.

This sequence belongs to the ZC3H14 family.

It localises to the nucleus. In terms of biological role, RNA-binding protein involved in RNA processing. Acts as a regulator of mRNA stability: binds to mRNAs and pre-mRNAs, preventing their degradation. Involved in the biogenesis of circular RNAs (circRNAs) which are produced by back-splicing circularization of pre-mRNAs. The polypeptide is Nuclear polyadenylated RNA-binding protein nab2 (Schizosaccharomyces pombe (strain 972 / ATCC 24843) (Fission yeast)).